A 172-amino-acid polypeptide reads, in one-letter code: Large ribosomal subunit protein uL10 (172 aa).

This sequence belongs to the universal ribosomal protein uL10 family. Part of the ribosomal stalk of the 50S ribosomal subunit. The N-terminus interacts with L11 and the large rRNA to form the base of the stalk. The C-terminus forms an elongated spine to which L12 dimers bind in a sequential fashion forming a multimeric L10(L12)X complex.

In terms of biological role, forms part of the ribosomal stalk, playing a central role in the interaction of the ribosome with GTP-bound translation factors. The protein is Large ribosomal subunit protein uL10 of Afipia carboxidovorans (strain ATCC 49405 / DSM 1227 / KCTC 32145 / OM5) (Oligotropha carboxidovorans).